Reading from the N-terminus, the 485-residue chain is 28S rRNA (uridine-N(3))-methyltransferase (485 aa).

Positions 296, 318, and 347 each coordinate S-adenosyl-L-methionine.

This sequence belongs to the class IV-like SAM-binding methyltransferase superfamily.

The protein resides in the nucleus. The enzyme catalyses uridine in 28S rRNA + S-adenosyl-L-methionine = N(3)-methyluridine in 28S rRNA + S-adenosyl-L-homocysteine + H(+). Functionally, S-adenosyl-L-methionine-dependent methyltransferase that specifically methylates the uridine in position 3485 of 28S rRNA. The chain is 28S rRNA (uridine-N(3))-methyltransferase from Drosophila melanogaster (Fruit fly).